The primary structure comprises 364 residues: Methylthioribose-1-phosphate isomerase (364 aa).

Residues 49–51 (RGA), arginine 89, and glutamine 201 each bind substrate. Aspartate 242 (proton donor) is an active-site residue. 252–253 (NK) contributes to the substrate binding site.

It belongs to the eIF-2B alpha/beta/delta subunits family. MtnA subfamily.

The catalysed reaction is 5-(methylsulfanyl)-alpha-D-ribose 1-phosphate = 5-(methylsulfanyl)-D-ribulose 1-phosphate. The protein operates within amino-acid biosynthesis; L-methionine biosynthesis via salvage pathway; L-methionine from S-methyl-5-thio-alpha-D-ribose 1-phosphate: step 1/6. Its function is as follows. Catalyzes the interconversion of methylthioribose-1-phosphate (MTR-1-P) into methylthioribulose-1-phosphate (MTRu-1-P). This chain is Methylthioribose-1-phosphate isomerase, found in Leptospira interrogans serogroup Icterohaemorrhagiae serovar copenhageni (strain Fiocruz L1-130).